The sequence spans 26 residues: Dermaseptin-J2 (26 aa).

V26 bears the Valine amide mark.

Expressed by the skin glands.

It is found in the secreted. Functionally, has antimicrobial activity. The sequence is that of Dermaseptin-J2 from Phasmahyla jandaia (Jandaia leaf frog).